We begin with the raw amino-acid sequence, 202 residues long: Small ribosomal subunit protein uS4c-1 (202 aa).

Positions 90–152 (MRLDNIVLRA…NKSRQLIDLN (63 aa)) constitute an S4 RNA-binding domain.

The protein belongs to the universal ribosomal protein uS4 family. Part of the 30S ribosomal subunit. Contacts protein S5. The interaction surface between S4 and S5 is involved in control of translational fidelity.

Its subcellular location is the plastid. The protein localises to the chloroplast. Its function is as follows. One of the primary rRNA binding proteins, it binds directly to 16S rRNA where it nucleates assembly of the body of the 30S subunit. In terms of biological role, with S5 and S12 plays an important role in translational accuracy. This Cyanidium caldarium (Red alga) protein is Small ribosomal subunit protein uS4c-1.